The chain runs to 919 residues: Phosphoenolpyruvate carboxylase (919 aa).

Residues histidine 138 and lysine 579 contribute to the active site.

It belongs to the PEPCase type 1 family. Requires Mg(2+) as cofactor.

It catalyses the reaction oxaloacetate + phosphate = phosphoenolpyruvate + hydrogencarbonate. Its function is as follows. Forms oxaloacetate, a four-carbon dicarboxylic acid source for the tricarboxylic acid cycle. This is Phosphoenolpyruvate carboxylase from Corynebacterium glutamicum (Brevibacterium saccharolyticum).